The chain runs to 426 residues: 4-hydroxy-3-methylbut-2-en-1-yl diphosphate synthase (flavodoxin) (426 aa).

[4Fe-4S] cluster contacts are provided by C320, C323, C366, and E373.

The protein belongs to the IspG family. [4Fe-4S] cluster is required as a cofactor.

The catalysed reaction is (2E)-4-hydroxy-3-methylbut-2-enyl diphosphate + oxidized [flavodoxin] + H2O + 2 H(+) = 2-C-methyl-D-erythritol 2,4-cyclic diphosphate + reduced [flavodoxin]. Its pathway is isoprenoid biosynthesis; isopentenyl diphosphate biosynthesis via DXP pathway; isopentenyl diphosphate from 1-deoxy-D-xylulose 5-phosphate: step 5/6. Converts 2C-methyl-D-erythritol 2,4-cyclodiphosphate (ME-2,4cPP) into 1-hydroxy-2-methyl-2-(E)-butenyl 4-diphosphate. The sequence is that of 4-hydroxy-3-methylbut-2-en-1-yl diphosphate synthase (flavodoxin) from Wolbachia sp. subsp. Drosophila simulans (strain wRi).